Reading from the N-terminus, the 1048-residue chain is uncharacterized protein (1048 aa).

A disordered region spans residues 601-629 (ENQINEEQQTNVENEQQTEQQFENEDKET). Low complexity predominate over residues 605-621 (NEEQQTNVENEQQTEQQ).

This is an uncharacterized protein from Methanocaldococcus jannaschii (strain ATCC 43067 / DSM 2661 / JAL-1 / JCM 10045 / NBRC 100440) (Methanococcus jannaschii).